A 230-amino-acid polypeptide reads, in one-letter code: Secretory carrier-associated membrane protein 4 (230 aa).

Residues 1–39 are Cytoplasmic-facing; sequence MAGKENNFPPLPPFLPLKPCFYQDFSDEIPVEHQVLVKR. 4 helical membrane passes run 40–60, 61–81, 106–126, and 149–169; these read IYRLWMFYCATLGVNLVACLA, WWIAGGAGANFGLALLWLVLF, MTFFFIFGAQFVLTVIQAIGF, and VVMLVPAILFSLSALVMAVTI. Topologically, residues 170–230 are cytoplasmic; sequence VKVHRIYRGA…SYSSSGGHWP (61 aa). Position 194 is a phosphothreonine (Thr-194).

It belongs to the SCAMP family.

The protein resides in the membrane. Functionally, probably involved in membrane protein trafficking. In Mus musculus (Mouse), this protein is Secretory carrier-associated membrane protein 4 (Scamp4).